A 545-amino-acid chain; its full sequence is 2-oxo-Delta(3)-4,5,5-trimethylcyclopentenylacetyl-CoA monooxygenase (545 aa).

FAD is bound by residues Thr-20, Glu-39, 47–50 (TWYW), 59–60 (DT), Tyr-65, and Val-112. Residue 57-59 (RLD) participates in NADP(+) binding. NADP(+) contacts are provided by residues 193-199 (TGATGVQ) and 216-217 (RT). Val-446 contributes to the FAD binding site. Trp-501 serves as a coordination point for NADP(+).

Belongs to the FAD-binding monooxygenase family. In terms of assembly, homodimer. FAD is required as a cofactor.

The catalysed reaction is [(1R)-2,2,3-trimethyl-5-oxocyclopent-3-enyl]acetyl-CoA + NADPH + O2 + H(+) = [(2R)-3,3,4-trimethyl-6-oxo-3,6-dihydro-1H-pyran-2-yl]acetyl-CoA + NADP(+) + H2O. Its pathway is terpene metabolism; (R)-camphor degradation. Functionally, involved in the degradation of (+)-camphor. Catalyzes the lactonization of 2-oxo-delta(3)-4,5, 5-trimethylcyclopentenylacetyl-CoA (OT-CoA), a key intermediate in the metabolism of camphor. 2-Oxocyclopentyl ethyl acetate is also a good substrate, as is 2-oxocyclohexyl ethyl acetate and methyl-substituted cyclohexanones, but free acid is a poor substrate. The chain is 2-oxo-Delta(3)-4,5,5-trimethylcyclopentenylacetyl-CoA monooxygenase (otemo) from Pseudomonas putida (Arthrobacter siderocapsulatus).